The primary structure comprises 1514 residues: MDFLGSTTGSGTLAMLFSFSESILPLDSRSFLLKPLFLRWLSGFLHSVLLLVLFFSWVRKKIRGDSGVTESLKDRRDFGFKSALFCSLALSLLNLVLMSLSGFYWYESGWLDNEQLVSSLGFLLGMVSWGVLSICLHRCRDCEHKKAPFLLRLWLVFYLVVSCYSLVVDFVMYERRETVPVHLLVFDIVAFIAAVFLGYVAVLKKDRSNSNGVLEEPLLNGGDSRVGGDDSVELNKTNGSGEATPYSRAGILSLLTFSWMSPLIDIGNKKTLDLEDVPQLHDTDSVVGLAPKFRSMLESPDGGERSGVTTFKLIKALYFTAQWEILVTAFFAFIYTVASYVGPALIDTFVQYLNGRRQYNHEGYVLVITFFAAKIVECLSQRHWFFRLQKVGIRMRSALVAMIYEKGLTLSCQSKQGRTSGEIINFMTVDAERIGNFSWYMHDPWMVLLQVGLALWILYRNLGLASIAALVATIIVMLINFPFGRMQERFQEKLMEAKDSRMKSTSEILRNMRILKLQGWEMKFLSKIFDLRKSEEGWLKKYVYNSAVISFVFWGAPTLVSVSTFGACILLGIPLESGKILSALATFRILQEPIYNLPDTISMIVQTKVSLDRLASYLCLDNLQPDIVERLPKGSSDVAVEVINSTLSWDVSSSNPTLKDINFKVFPGMKVAVCGTVGSGKSSLLSSLLGEVPKVSGSLKVCGTKAYVAQSPWIQSGKIEDNILFGKPMERERYDKVLEACSLSKDLEILSFGDQTVIGERGINLSGGQKQRIQIARALYQDADIYLFDDPFSAVDAHTGSHLFKEVLLGLLCSKSVIYVTHQVEFLPAADLILVMKDGRISQAGKYNDILNSGTDFMELIGAHQEALAVVDSVDANSVSEKSALGQENVIVKDAIAVDEKLESQDLKNDKLESVEPQRQIIQEEEREKGSVALDVYWKYITLAYGGALVPFILLGQVLFQLLQIGSNYWMAWATPVSEDVQAPVKLSTLMIVYVALAFGSSLCILLRATLLVTAGYKTATELFHKMHHCIFRSPMSFFDSTPSGRIMSRASTDQSAVDLELPYQFGSVAITVIQLIGIIGVMSQVSWLVFLVFIPVVAASIWYQRYYIAAARELSRLVGVCKAPLIQHFSETISGATTIRSFSQEFRFRSDNMRLSDGYSRPKFYTAGAMEWLCFRLDMLSSLTFVFSLVFLVSIPTGVIDPSLAGLAVTYGLSLNTLQAWLIWTLCNLENKIISVERILQYASVPSEPPLVIESNRPEQSWPSRGEVEIRDLQVRYAPHMPLVLRGITCTFKGGLRTGIVGRTGSGKSTLIQTLFRIVEPSAGEIRIDGVNILTIGLHDLRLRLSIIPQDPTMFEGTMRSNLDPLEEYTDDQIWEALDKCQLGDEVRKKEQKLDSSVSENGDNWSMGQRQLVCLGRVLLKRSKILVLDEATASVDTATDNLIQKTLREHFSDCTVITIAHRISSVIDSDMVLLLSNGIIEEYDTPVRLLEDKSSSFSKLVAEYTSRSSSSFD.

A run of 10 helical transmembrane segments spans residues 35 to 55 (PLFL…VLFF), 83 to 103 (ALFC…LSGF), 116 to 136 (LVSS…SICL), 153 to 173 (LWLV…FVMY), 183 to 203 (LLVF…VAVL), 325 to 345 (ILVT…GPAL), 364 to 386 (YVLV…HWFF), 439 to 459 (WYMH…WILY), 463 to 483 (GLAS…NFPF), and 551 to 571 (FVFW…CILL). The 282-residue stretch at 325–606 (ILVTAFFAFI…LPDTISMIVQ (282 aa)) folds into the ABC transmembrane type-1 1 domain. Positions 640–863 (VEVINSTLSW…GTDFMELIGA (224 aa)) constitute an ABC transporter 1 domain. 675 to 682 (GTVGSGKS) provides a ligand contact to ATP. The next 5 membrane-spanning stretches (helical) occupy residues 940–960 (YITL…QVLF), 987–1007 (LSTL…CILL), 1077–1097 (IGII…FIPV), 1181–1201 (LSSL…TGVI), and 1205–1225 (LAGL…WLIW). The region spanning 950–1232 (VPFILLGQVL…LIWTLCNLEN (283 aa)) is the ABC transmembrane type-1 2 domain. An ABC transporter 2 domain is found at 1271-1503 (IRDLQVRYAP…KSSSFSKLVA (233 aa)). 1303–1310 (GRTGSGKS) contacts ATP.

The protein belongs to the ABC transporter superfamily. ABCC family. Conjugate transporter (TC 3.A.1.208) subfamily. Ubiquitous.

The protein resides in the membrane. The enzyme catalyses ATP + H2O + xenobioticSide 1 = ADP + phosphate + xenobioticSide 2.. With respect to regulation, glutathione-conjugate transport is inhibited by decyl-glutathione and, to a lower extent, by GS-GS, but not by GSH. All transports are inhibited by vanadate. Pump for glutathione S-conjugates. Mediates the transport of glutathione conjugates such as chlorodinitrobenzene-GS (DNB-GS), and of chlorophyll catabolites such as Bn-NCC-1. Also transports heavy metals such as cadmium (Cd). This chain is ABC transporter C family member 3 (ABCC3), found in Arabidopsis thaliana (Mouse-ear cress).